The chain runs to 267 residues: Thiamine pyrophosphokinase 3 (267 aa).

Belongs to the thiamine pyrophosphokinase family.

It localises to the cytoplasm. The protein localises to the cytosol. It catalyses the reaction thiamine + ATP = thiamine diphosphate + AMP + H(+). It participates in cofactor biosynthesis; thiamine diphosphate biosynthesis; thiamine diphosphate from thiamine: step 1/1. Functionally, catalyzes the phosphorylation of thiamine to thiamine pyrophosphate (TPP). TPP is an active cofactor for enzymes involved in glycolysis and energy production. Plant leaves require high levels of TPP for photosynthesis and carbohydrate metabolism. This is Thiamine pyrophosphokinase 3 (TPK3) from Oryza sativa subsp. japonica (Rice).